A 457-amino-acid chain; its full sequence is Protein trichome birefringence-like 4 (457 aa).

Residues 19–37 (IFLTSLFFLSLFLLSSSSL) traverse the membrane as a helical; Signal-anchor for type II membrane protein segment. A GDS motif motif is present at residues 173–175 (GDS). Positions 420-434 (DCSHWCLPGVPDSWN) match the DCXHWCLPGXXDXWN motif motif.

This sequence belongs to the PC-esterase family. TBL subfamily.

The protein resides in the membrane. In terms of biological role, may act as a bridging protein that binds pectin and other cell wall polysaccharides. Probably involved in maintaining esterification of pectins. May be involved in the specific O-acetylation of cell wall polymers. This Arabidopsis thaliana (Mouse-ear cress) protein is Protein trichome birefringence-like 4 (TBL4).